We begin with the raw amino-acid sequence, 392 residues long: Heat-inducible transcription repressor HrcA (392 aa).

Belongs to the HrcA family.

Functionally, negative regulator of class I heat shock genes (grpE-dnaK-dnaJ and groELS operons). Prevents heat-shock induction of these operons. This Chlamydia trachomatis serovar D (strain ATCC VR-885 / DSM 19411 / UW-3/Cx) protein is Heat-inducible transcription repressor HrcA.